A 165-amino-acid polypeptide reads, in one-letter code: Cytochrome c-type biogenesis protein CcmE (165 aa).

Residues 1–7 (MTRKQKR) lie on the Cytoplasmic side of the membrane. The chain crosses the membrane as a helical; Signal-anchor for type II membrane protein span at residues 8–28 (LAVIAGGMGFIIAAVLLVMFA). The Periplasmic portion of the chain corresponds to 29–165 (FSQSVAYFYM…GQGQEAKATR (137 aa)). Heme contacts are provided by His-124 and Tyr-128. The span at 144–154 (QDGQGAQSQAG) shows a compositional bias: low complexity. Residues 144 to 165 (QDGQGAQSQAGQGQGQEAKATR) form a disordered region.

Belongs to the CcmE/CycJ family.

The protein localises to the cell inner membrane. Functionally, heme chaperone required for the biogenesis of c-type cytochromes. Transiently binds heme delivered by CcmC and transfers the heme to apo-cytochromes in a process facilitated by CcmF and CcmH. This chain is Cytochrome c-type biogenesis protein CcmE, found in Rhizobium etli (strain CIAT 652).